We begin with the raw amino-acid sequence, 1479 residues long: Type VII secretion system protein EssC (1479 aa).

Residues 1 to 189 form a required for substrate secretion, protein missing this segment is unstable region; sequence MHKLIIKYNK…ASSLIRLTQE (189 aa). Topologically, residues 1 to 229 are cytoplasmic; sequence MHKLIIKYNK…RPPQPIQKNN (229 aa). Residues 230 to 252 form a helical membrane-spanning segment; that stretch reads TVIWRSIIPPLVMIALTVVIFLV. The Extracellular portion of the chain corresponds to 253 to 256; it reads RPIG. A helical transmembrane segment spans residues 257–279; that stretch reads IYILMMIGMSTVTIVFGITTYFS. Residues 280–1479 lie on the Cytoplasmic side of the membrane; that stretch reads EKKKYNKDVE…QAYQKIRWFK (1200 aa). 2 consecutive FtsK domains span residues 652–846 and 997–1183; these read DDIL…QDSN and QGPM…SEVS. ATP contacts are provided by residues 672–679 and 1014–1021; these read GTTGSGKS and GSPGYGRT. The segment at 1249-1479 is required for substrate secretion, truncated protein is stable; it reads MMPDEIKYED…QAYQKIRWFK (231 aa).

The protein belongs to the EssC family. As to quaternary structure, homooligomer. Interacts with EsaE.

It is found in the cell membrane. Functionally, component of the type VII secretion system (Ess). Required for the secretion of substrates including EsxA and EsxB. However, unable to support secretion of the substrate protein EsxC. This is Type VII secretion system protein EssC from Staphylococcus aureus (strain NCTC 8325 / PS 47).